Consider the following 213-residue polypeptide: Homeobox protein koza (213 aa).

Residues 24 to 72 form a disordered region; the sequence is ILSHMGPGSKEKSLGFPKTDQDQDSSLRDTEEKYASEKLQSSSQPAEIH. A compositionally biased stretch (basic and acidic residues) spans 32–59; sequence SKEKSLGFPKTDQDQDSSLRDTEEKYAS. The segment at residues 102 to 161 is a DNA-binding region (homeobox); the sequence is QKRSRAAFSHSQVIELERKFSSQKYLSAPERAQLAKSLKLTETQVKIWFQNRRYKTKRKQ.

This sequence belongs to the NK-3 homeobox family. Expressed in the muscle layer of embryonic somites. In tailbud embryos, expressed throughout the entire myotome but at the mid-tailbud stage (stage 32), expression becomes restricted to the outer periphery of the somite so that by the tadpole stage only the outer, type I cells show expression. Also expressed in the dorsal cement gland and in the myocardial layer of the developing heart. In all tissues, expression begins after terminal differentiation.

Its subcellular location is the nucleus. May regulate cell proliferation in a tissue-specific manner. This is Homeobox protein koza from Xenopus laevis (African clawed frog).